An 896-amino-acid chain; its full sequence is Translation initiation factor IF-2 (896 aa).

Basic and acidic residues predominate over residues 117 to 174 (AEAEAKAKAEAEAKAKVDAEAKVKAKAEAEAKAKAKVQTEKPAAETAEDKAAKAEEAK). Residues 117-303 (AEAEAKAKAE…TRSVAPESMD (187 aa)) are disordered. The segment covering 175–195 (LLAAQDAVAKAKANEEASAAA) has biased composition (low complexity). Over residues 196-227 (DEARRLAEENEKRWAEEEKARKEAEKSVDHHV) the composition is skewed to basic and acidic residues. The segment covering 254–268 (PSANAGNNANANAGA) has biased composition (low complexity). The 168-residue stretch at 396-563 (PRAPVVTIMG…GILLEAEVLE (168 aa)) folds into the tr-type G domain. Residues 405–412 (GHVDHGKT) are G1. 405 to 412 (GHVDHGKT) provides a ligand contact to GTP. The G2 stretch occupies residues 430–434 (GITQH). The tract at residues 451 to 454 (DTPG) is G3. Residues 451-455 (DTPGH) and 505-508 (NKID) each bind GTP. The segment at 505–508 (NKID) is G4. Residues 541-543 (SAK) form a G5 region.

This sequence belongs to the TRAFAC class translation factor GTPase superfamily. Classic translation factor GTPase family. IF-2 subfamily.

Its subcellular location is the cytoplasm. One of the essential components for the initiation of protein synthesis. Protects formylmethionyl-tRNA from spontaneous hydrolysis and promotes its binding to the 30S ribosomal subunits. Also involved in the hydrolysis of GTP during the formation of the 70S ribosomal complex. The sequence is that of Translation initiation factor IF-2 from Shewanella pealeana (strain ATCC 700345 / ANG-SQ1).